The primary structure comprises 467 residues: Transcription factor bHLH3 (467 aa).

The bHLH domain maps to 316 to 365 (EEALNHVEAERQRREKLNQRFYALRAVVPNISKMDKASLLADAITYITDM).

Homodimer.

It is found in the nucleus. The chain is Transcription factor bHLH3 (BHLH3) from Arabidopsis thaliana (Mouse-ear cress).